The following is a 303-amino-acid chain: MPQNKVLSFPLPEGTLLEDITKNKWILGKQLGSGGFGLVYQVSCKSKEIDCVAKIELKESGGLFCEINFYNRVMKNKTSLDTWMKEQKIDYIGIPSFHGFGITIYKNVEYRFAIIQRLGRDLENILSEKEKFNITVIKKLAIKILDILKFIHSKEFSHGDIKAGNILFGKDDDKVYLVDYGLATKYSSNGKHKEYTINPKNRHNGTMAFTSIDAHKGVTVSRRGDLESLGFCMLKWYSGKLPWEKYEKEPENVQGMKEAFVNNISKKTIPFKNAGIIYNYIKVVTKLEYEEAPNYESLKQMFL.

One can recognise a Protein kinase domain in the interval 25–303; the sequence is WILGKQLGSG…NYESLKQMFL (279 aa). ATP-binding positions include 31–39 and Lys54; that span reads LGSGGFGLV. Asp160 (proton acceptor) is an active-site residue.

The protein belongs to the protein kinase superfamily. Ser/Thr protein kinase family. Poxviruses subfamily.

It catalyses the reaction L-seryl-[protein] + ATP = O-phospho-L-seryl-[protein] + ADP + H(+). The enzyme catalyses L-threonyl-[protein] + ATP = O-phospho-L-threonyl-[protein] + ADP + H(+). This is Probable serine/threonine-protein kinase FPV212 from Vertebrata (FPV).